Here is a 244-residue protein sequence, read N- to C-terminus: Uridylate kinase (244 aa).

17–20 serves as a coordination point for ATP; that stretch reads KVSG. The tract at residues 25–30 is involved in allosteric activation by GTP; that stretch reads GDKGFG. Residue glycine 59 coordinates UMP. Glycine 60 and arginine 64 together coordinate ATP. Residues aspartate 80 and 141-148 contribute to the UMP site; that span reads VGNPFFTT. ATP contacts are provided by threonine 168, glutamine 169, tyrosine 174, and aspartate 177.

It belongs to the UMP kinase family. Homohexamer.

The protein resides in the cytoplasm. It catalyses the reaction UMP + ATP = UDP + ADP. The protein operates within pyrimidine metabolism; CTP biosynthesis via de novo pathway; UDP from UMP (UMPK route): step 1/1. Allosterically activated by GTP. Inhibited by UTP. Catalyzes the reversible phosphorylation of UMP to UDP. This chain is Uridylate kinase, found in Ehrlichia ruminantium (strain Welgevonden).